Consider the following 191-residue polypeptide: uncharacterized protein (191 aa).

To E.coli YecM.

This is an uncharacterized protein from Haemophilus influenzae (strain ATCC 51907 / DSM 11121 / KW20 / Rd).